Consider the following 325-residue polypeptide: Tagatose 1,6-diphosphate aldolase 1 (325 aa).

Belongs to the aldolase LacD family.

It catalyses the reaction D-tagatofuranose 1,6-bisphosphate = D-glyceraldehyde 3-phosphate + dihydroxyacetone phosphate. It participates in carbohydrate metabolism; D-tagatose 6-phosphate degradation; D-glyceraldehyde 3-phosphate and glycerone phosphate from D-tagatose 6-phosphate: step 2/2. In Enterococcus faecalis (strain ATCC 700802 / V583), this protein is Tagatose 1,6-diphosphate aldolase 1 (lacD1).